The sequence spans 145 residues: Large ribosomal subunit protein uL13 (145 aa).

It belongs to the universal ribosomal protein uL13 family. As to quaternary structure, part of the 50S ribosomal subunit.

This protein is one of the early assembly proteins of the 50S ribosomal subunit, although it is not seen to bind rRNA by itself. It is important during the early stages of 50S assembly. The protein is Large ribosomal subunit protein uL13 of Bacillus cereus (strain ZK / E33L).